We begin with the raw amino-acid sequence, 333 residues long: Phenylalanine--tRNA ligase alpha subunit (333 aa).

Glu254 serves as a coordination point for Mg(2+).

The protein belongs to the class-II aminoacyl-tRNA synthetase family. Phe-tRNA synthetase alpha subunit type 1 subfamily. As to quaternary structure, tetramer of two alpha and two beta subunits. Requires Mg(2+) as cofactor.

It is found in the cytoplasm. It catalyses the reaction tRNA(Phe) + L-phenylalanine + ATP = L-phenylalanyl-tRNA(Phe) + AMP + diphosphate + H(+). This is Phenylalanine--tRNA ligase alpha subunit from Xylella fastidiosa (strain M23).